The sequence spans 148 residues: NADPH-dependent 7-cyano-7-deazaguanine reductase (148 aa).

Catalysis depends on Cys-50, which acts as the Thioimide intermediate. Catalysis depends on Asp-57, which acts as the Proton donor. Substrate is bound by residues 72–74 (VES) and 91–92 (HE).

It belongs to the GTP cyclohydrolase I family. QueF type 1 subfamily.

It is found in the cytoplasm. It catalyses the reaction 7-aminomethyl-7-carbaguanine + 2 NADP(+) = 7-cyano-7-deazaguanine + 2 NADPH + 3 H(+). It functions in the pathway tRNA modification; tRNA-queuosine biosynthesis. In terms of biological role, catalyzes the NADPH-dependent reduction of 7-cyano-7-deazaguanine (preQ0) to 7-aminomethyl-7-deazaguanine (preQ1). The chain is NADPH-dependent 7-cyano-7-deazaguanine reductase from Helicobacter pylori (strain G27).